We begin with the raw amino-acid sequence, 284 residues long: Urease accessory protein UreD (284 aa).

The protein belongs to the UreD family. In terms of assembly, ureD, UreF and UreG form a complex that acts as a GTP-hydrolysis-dependent molecular chaperone, activating the urease apoprotein by helping to assemble the nickel containing metallocenter of UreC. The UreE protein probably delivers the nickel.

It localises to the cytoplasm. In terms of biological role, required for maturation of urease via the functional incorporation of the urease nickel metallocenter. The chain is Urease accessory protein UreD from Bordetella bronchiseptica (strain ATCC BAA-588 / NCTC 13252 / RB50) (Alcaligenes bronchisepticus).